The following is a 374-amino-acid chain: Protein-glutamate methylesterase/protein-glutamine glutaminase 1 (374 aa).

In terms of domain architecture, Response regulatory spans 4-121; that stretch reads KVLVVDDSSF…ATNKDEAILL (118 aa). Aspartate 55 is modified (4-aspartylphosphate). Positions 141–170 are disordered; that stretch reads PSVAPVTPRPTTGSAVGNATTPVQSASAPV. A compositionally biased stretch (polar residues) spans 149 to 167; it reads RPTTGSAVGNATTPVQSAS. One can recognise a CheB-type methylesterase domain in the interval 174–374; that stretch reads PLSSIRASGK…ESILKESARG (201 aa). Catalysis depends on residues serine 193, histidine 220, and aspartate 316.

This sequence belongs to the CheB family. In terms of processing, phosphorylated by CheA. Phosphorylation of the N-terminal regulatory domain activates the methylesterase activity.

It localises to the cytoplasm. It catalyses the reaction [protein]-L-glutamate 5-O-methyl ester + H2O = L-glutamyl-[protein] + methanol + H(+). The enzyme catalyses L-glutaminyl-[protein] + H2O = L-glutamyl-[protein] + NH4(+). Its function is as follows. Involved in chemotaxis. Part of a chemotaxis signal transduction system that modulates chemotaxis in response to various stimuli. Catalyzes the demethylation of specific methylglutamate residues introduced into the chemoreceptors (methyl-accepting chemotaxis proteins or MCP) by CheR. Also mediates the irreversible deamidation of specific glutamine residues to glutamic acid. In Shewanella oneidensis (strain ATCC 700550 / JCM 31522 / CIP 106686 / LMG 19005 / NCIMB 14063 / MR-1), this protein is Protein-glutamate methylesterase/protein-glutamine glutaminase 1.